The chain runs to 128 residues: Small ribosomal subunit protein eS8 (128 aa).

It belongs to the eukaryotic ribosomal protein eS8 family. As to quaternary structure, part of the 30S ribosomal subunit.

In Methanococcus maripaludis (strain C7 / ATCC BAA-1331), this protein is Small ribosomal subunit protein eS8.